The primary structure comprises 418 residues: Glutamyl-tRNA reductase (418 aa).

Substrate contacts are provided by residues 49–52, Ser-109, 114–116, and Gln-120; these read TCNR and EPQ. Cys-50 serves as the catalytic Nucleophile. Position 189–194 (189–194) interacts with NADP(+); the sequence is GAGETI.

Belongs to the glutamyl-tRNA reductase family. In terms of assembly, homodimer.

The enzyme catalyses (S)-4-amino-5-oxopentanoate + tRNA(Glu) + NADP(+) = L-glutamyl-tRNA(Glu) + NADPH + H(+). Its pathway is porphyrin-containing compound metabolism; protoporphyrin-IX biosynthesis; 5-aminolevulinate from L-glutamyl-tRNA(Glu): step 1/2. In terms of biological role, catalyzes the NADPH-dependent reduction of glutamyl-tRNA(Glu) to glutamate 1-semialdehyde (GSA). The chain is Glutamyl-tRNA reductase from Salmonella heidelberg (strain SL476).